The sequence spans 261 residues: tRNA pseudouridine synthase A (261 aa).

The Nucleophile role is filled by aspartate 51. Residue tyrosine 109 coordinates substrate.

It belongs to the tRNA pseudouridine synthase TruA family. As to quaternary structure, homodimer.

The enzyme catalyses uridine(38/39/40) in tRNA = pseudouridine(38/39/40) in tRNA. Functionally, formation of pseudouridine at positions 38, 39 and 40 in the anticodon stem and loop of transfer RNAs. The sequence is that of tRNA pseudouridine synthase A from Methylobacillus flagellatus (strain ATCC 51484 / DSM 6875 / VKM B-1610 / KT).